We begin with the raw amino-acid sequence, 396 residues long: L-lactate dehydrogenase (396 aa).

An FMN hydroxy acid dehydrogenase domain is found at 1–380 (MIISAASDYR…TQDSLVQGLG (380 aa)). Tyr-24 is a substrate binding site. Residues Ser-106 and Gln-127 each coordinate FMN. Substrate is bound at residue Tyr-129. Residue Thr-155 coordinates FMN. Substrate is bound at residue Arg-164. Lys-251 contributes to the FMN binding site. The Proton acceptor role is filled by His-275. Substrate is bound at residue Arg-278. 306-330 (DSGIRNGLDVVRMIALGADTVLLGR) is a binding site for FMN.

The protein belongs to the FMN-dependent alpha-hydroxy acid dehydrogenase family. The cofactor is FMN.

It localises to the cell inner membrane. The catalysed reaction is (S)-lactate + A = pyruvate + AH2. Catalyzes the conversion of L-lactate to pyruvate. Is coupled to the respiratory chain. The polypeptide is L-lactate dehydrogenase (Escherichia coli O7:K1 (strain IAI39 / ExPEC)).